The following is a 204-amino-acid chain: Large ribosomal subunit protein uL4 (204 aa).

Residues 52–76 form a disordered region; sequence AEVRGGGKKPWAQKGGGRARAGSRR.

It belongs to the universal ribosomal protein uL4 family. As to quaternary structure, part of the 50S ribosomal subunit.

In terms of biological role, one of the primary rRNA binding proteins, this protein initially binds near the 5'-end of the 23S rRNA. It is important during the early stages of 50S assembly. It makes multiple contacts with different domains of the 23S rRNA in the assembled 50S subunit and ribosome. Its function is as follows. Forms part of the polypeptide exit tunnel. The chain is Large ribosomal subunit protein uL4 from Sulfurimonas denitrificans (strain ATCC 33889 / DSM 1251) (Thiomicrospira denitrificans (strain ATCC 33889 / DSM 1251)).